The chain runs to 433 residues: Urokinase-type plasminogen activator (433 aa).

The N-terminal stretch at 1–20 is a signal peptide; that stretch reads MRALLAHLLLCVLVVSASKG. The region spanning 26 to 62 is the EGF-like domain; it reads VPSDCGCLNGGTCMSNKYFSSIHWCNCPKKFGGQHCE. Intrachain disulfides connect C30-C38, C32-C50, C52-C61, C69-C150, C90-C132, and C121-C145. Residues 33 to 56 form a binds urokinase plasminogen activator surface receptor region; that stretch reads LNGGTCMSNKYFSSIHWCNCPKKF. In terms of domain architecture, Kringle spans 69–150; that stretch reads CYEGNGHFYR…RVQECMVHNC (82 aa). Residues 151–177 are connecting peptide; sequence ADGKKPSSPPEELQFQCGQRTLRPRFK. S157 carries the phosphoserine modification. 6 cysteine pairs are disulfide-bonded: C167/C298, C208/C224, C216/C287, C315/C384, C347/C363, and C374/C402. The region spanning 178 to 426 is the Peptidase S1 domain; the sequence is IVGGEFTTIE…FLPWIHSHTR (249 aa). Catalysis depends on charge relay system residues H223 and D274. Residue N324 is glycosylated (N-linked (GlcNAc...) asparagine). Position 325 is a phosphoserine (S325). The active-site Charge relay system is the S378.

This sequence belongs to the peptidase S1 family. In terms of assembly, found in high and low molecular mass forms. Each consists of two chains, A and B. The high molecular mass form contains a long chain A which is cleaved to yield a short chain A. Forms heterodimer with SERPINA5. Binds LRP1B; binding is followed by internalization and degradation. Interacts with MRC2. Interacts with PLAUR. In complex with SERPINE1, interacts with PLAUR/uPAR. Interacts with SORL1 and LRP1, either alone or in complex with SERPINE1; these interactions are abolished in the presence of LRPAP1/RAP. The ternary complex composed of PLAUR-PLAU-PAI1 also interacts with SORLA. Phosphorylation of Ser-157 and Ser-325 abolishes proadhesive ability but does not interfere with receptor binding. Post-translationally, produced as an inactive single-chain protein (pro-uPA or sc-uPA), is processed into the active disulfide-linked two-chain form of PLAU/uPA by a proteolytic event mediated, at least, by TMPRSS4.

The protein resides in the secreted. It carries out the reaction Specific cleavage of Arg-|-Val bond in plasminogen to form plasmin.. Inhibited by SERPINA5. Inhibited by SERPINE1. Specifically cleaves the zymogen plasminogen to form the active enzyme plasmin. In Papio cynocephalus (Yellow baboon), this protein is Urokinase-type plasminogen activator (PLAU).